Here is an 85-residue protein sequence, read N- to C-terminus: Large ribosomal subunit protein bL27 (85 aa).

The protein belongs to the bacterial ribosomal protein bL27 family.

This is Large ribosomal subunit protein bL27 from Sodalis glossinidius (strain morsitans).